The following is an 84-amino-acid chain: Kunitz-type neurotoxin MitTx-alpha (84 aa).

The first 24 residues, 1 to 24 (MSSGGLLLLLGLLTLCAELTPVSS), serve as a signal peptide directing secretion. The residue at position 25 (Q25) is a Pyrrolidone carboxylic acid. Residues 31-82 (CYEDPPFFQKCGAFVDSYYFNRSRITCVHFFYGQCDVNQNHFTTMSECNRVC) enclose the BPTI/Kunitz inhibitor domain. 3 disulfides stabilise this stretch: C31-C82, C41-C65, and C57-C78.

This sequence belongs to the venom Kunitz-type family. In terms of assembly, heterodimer of an alpha (Kunitz-type) and a beta (phospholipase A2 homolog) chains; non-covalently-linked. As to expression, expressed by the venom gland.

It localises to the secreted. Its function is as follows. MitTx, a heteromeric complex between Kunitz- and phospholipase-A2-like proteins, potently, persistently and selectively activates rat and chicken acid-sensing ion channel ASIC1. Both alternatively spliced rat isoforms ASIC1a and ASIC1b are activated, with a higher potency for ASIC1a (EC(50)=9.4 nM) vs ASIC1b (EC(50)=23 nM). The rat ASIC3 subtype is also sensitive to the heterodimer, but with a lower potency (EC(50)=830 nM). On rat ASIC2a, the toxin shows a very weak activation, but produces a remarkable potentiation (&gt;100-fold) of protons when the extracellular pH drops below neutrality. Moderate and weak activations are also observed on the heterotrimers Asic1a-Asic2a and Asic1a-Asic3 (expressed in CHO cells), respectively. The binding sites of the beta subunit of MitTx and the spider psalmotoxin-1 overlap, explaining why these toxins are mutually exclusive. In vivo, the heterodimer elicits robust pain-related behavior in mice by activation of ASIC1 channels on capsaicin-sensitive nerve fibers. This is Kunitz-type neurotoxin MitTx-alpha from Micrurus tener tener (Texas coral snake).